We begin with the raw amino-acid sequence, 521 residues long: GMP synthase [glutamine-hydrolyzing] (521 aa).

The 196-residue stretch at K8 to L203 folds into the Glutamine amidotransferase type-1 domain. The Nucleophile role is filled by C85. Catalysis depends on residues H177 and E179. A GMPS ATP-PPase domain is found at W204–R396. Residue S231–S237 participates in ATP binding.

As to quaternary structure, homodimer.

The catalysed reaction is XMP + L-glutamine + ATP + H2O = GMP + L-glutamate + AMP + diphosphate + 2 H(+). Its pathway is purine metabolism; GMP biosynthesis; GMP from XMP (L-Gln route): step 1/1. Catalyzes the synthesis of GMP from XMP. In Stenotrophomonas maltophilia (strain R551-3), this protein is GMP synthase [glutamine-hydrolyzing].